Consider the following 339-residue polypeptide: Dihydroorotate dehydrogenase (quinone) (339 aa).

FMN-binding positions include 62 to 66 (AGMDK) and Thr86. Lys66 lines the substrate pocket. Substrate is bound at residue 111 to 115 (NRMGF). 2 residues coordinate FMN: Asn139 and Asn172. Substrate is bound at residue Asn172. The Nucleophile role is filled by Ser175. Asn177 provides a ligand contact to substrate. Lys217 and Thr245 together coordinate FMN. Residue 246 to 247 (NT) coordinates substrate. Residues Gly268, Gly297, and 318-319 (YS) contribute to the FMN site.

It belongs to the dihydroorotate dehydrogenase family. Type 2 subfamily. Monomer. Requires FMN as cofactor.

Its subcellular location is the cell membrane. The enzyme catalyses (S)-dihydroorotate + a quinone = orotate + a quinol. It participates in pyrimidine metabolism; UMP biosynthesis via de novo pathway; orotate from (S)-dihydroorotate (quinone route): step 1/1. Its function is as follows. Catalyzes the conversion of dihydroorotate to orotate with quinone as electron acceptor. The polypeptide is Dihydroorotate dehydrogenase (quinone) (Shewanella sp. (strain MR-4)).